The sequence spans 441 residues: Protein MONOCULM 1 (441 aa).

Positions 1–33 are disordered; sequence MLRSLHSSSSSDTDNNSGGCKNNGGGGGEAAAA. Residues 7–20 are compositionally biased toward low complexity; it reads SSSSSDTDNNSGGC. The span at 21–33 shows a compositional bias: gly residues; sequence KNNGGGGGEAAAA. The 397-residue stretch at 41–437 folds into the GRAS domain; the sequence is RAVAAAAPST…RPLLSVSAWQ (397 aa). Residues 48-126 form a leucine repeat I (LRI) region; sequence PSTRDLLLAC…GAARPASSGA (79 aa). The VHIID stretch occupies residues 127-195; that stretch reads YLAFNQIAPF…LGPPEVRVTG (69 aa). The VHIID signature appears at 158-162; sequence VHILD. A leucine repeat II (LRII) region spans residues 205-256; it reads RTGNRLRAFARSIHLPFHFTPLLLSCATTAPHHVAGTSTGAAAAASTAAAAT. Residues 266 to 361 are PFYRE; sequence LAVNCVMFLH…QEVLGREIEA (96 aa). The segment at 364-437 is SAW; the sequence is GPSGGRWWRG…RPLLSVSAWQ (74 aa).

This sequence belongs to the GRAS family. As to expression, expressed in a small number of epidermal or subepidermal cells at the leaf axils, in axillary meristems and the entire tiller buds. Undetected in the shoot apical meristem.

Its subcellular location is the nucleus. In terms of biological role, putative transcription regulator that controls rice tillering by initiating axillary buds and promoting their outgrowth. Rice tiller is a specialized grain-bearing branch that is formed on the unelongated basal internode and grows independently of the mother stem (culm) by means of its own adventitious roots. The chain is Protein MONOCULM 1 from Oryza sativa subsp. japonica (Rice).